We begin with the raw amino-acid sequence, 416 residues long: Thyroid hormone receptor alpha (416 aa).

The segment covering 1–13 has biased composition (polar residues); sequence MEPMSNKQDSNSS. The tract at residues 1–37 is disordered; the sequence is MEPMSNKQDSNSSEGDEKGWPDVPKRKRKNSQCSMKS. Positions 1–58 are modulating; that stretch reads MEPMSNKQDSNSSEGDEKGWPDVPKRKRKNSQCSMKSMSALSVSVPGYIPSYLEKDEP. Over residues 15–24 the composition is skewed to basic and acidic residues; it reads GDEKGWPDVP. Positions 59, 62, 76, 79, 97, 103, 113, and 116 each coordinate Zn(2+). 2 consecutive NR C4-type zinc fingers follow at residues 59–79 and 97–121; these read CVVC…CEGC and CKYE…FKKC. The nuclear receptor DNA-binding region spans 59-133; that stretch reads CVVCGDKATG…VGMAMDLVLD (75 aa). The 245-residue stretch at 169–413 folds into the NR LBD domain; that stretch reads AEWELIRMAT…PPLFLEVFED (245 aa). Arginine 234 is a 3,3',5-triiodo-L-thyronine binding site.

The protein belongs to the nuclear hormone receptor family. NR1 subfamily.

Its subcellular location is the nucleus. Functionally, nuclear hormone receptor that can act as a repressor or activator of transcription. High affinity receptor for thyroid hormones, including triiodothyronine and thyroxine. The sequence is that of Thyroid hormone receptor alpha (thra) from Hippoglossus hippoglossus (Atlantic halibut).